We begin with the raw amino-acid sequence, 169 residues long: Der GTPase-activating protein YihI (169 aa).

Disordered stretches follow at residues 1-99 and 146-169; these read MKPS…QAEL and SYDDDEEEEEDEKQEDMMRLLRGN. Residues 10 to 19 show a composition bias toward basic residues; it reads SKGHAKARRK. The segment covering 20 to 30 has biased composition (basic and acidic residues); it reads TREELDQEARD. Positions 31–40 are enriched in basic residues; it reads RKRQKKRRGH. Polar residues predominate over residues 49 to 58; it reads GNTTSGSKGQ. Positions 147 to 159 are enriched in acidic residues; sequence YDDDEEEEEDEKQ. A compositionally biased stretch (basic and acidic residues) spans 160–169; that stretch reads EDMMRLLRGN.

The protein belongs to the YihI family. In terms of assembly, interacts with Der.

Its function is as follows. A GTPase-activating protein (GAP) that modifies Der/EngA GTPase function. May play a role in ribosome biogenesis. The sequence is that of Der GTPase-activating protein YihI from Escherichia coli O45:K1 (strain S88 / ExPEC).